The chain runs to 2907 residues: MGRRRRLCLQPYFVWLGCVALWAQGTDGQPQPPPPKTLRPQPPPQQVRPAVAGSEGGFMGPEYRDEGAVAASRVRRRGQQEILRGPNVCGSRFHSYCCPGWKTLPGGNQCIVPICRNSCGDGFCSRPNMCTCSSGQISPTCGAKSIQQCSVRCMNGGTCADDHCQCQKGYIGTYCGQPVCENGCQNGGRCIGPNRCACVYGFTGPQCERDYRTGPCFTQVNNQMCQGQLTGIVCTKTLCCATIGRAWGHPCEMCPAQPQPCRRGFIPNIRTGACQDVDECQAIPGLCQGGNCINTVGSFECRCPAGHKQSETTQKCEDIDECSVIPGVCETGDCSNTVGSYFCLCPRGFVTSTDGSRCIDQRAGTCFSGLVNGRCAQELPGRMAKAQCCCEPGRCWSIGTIPEACPVRGSEEYRRLCLDGLPMGGIPGSSVSRPGGTGSTGNGYGPGGTGFLPIPGDNGFSPGVGGAGVGAGGQGPIITGLTILNQTIDICKHHANLCLNGRCIPTVSSYRCECNMGYKQDANGDCIDVDECTSNPCSNGDCVNTPGSYYCKCHAGFQRTPTKQACIDIDECIQNGVLCKNGRCVNTDGSFQCICNAGFELTTDGKNCVDHDECTTTNMCLNGMCINEDGSFKCVCKPGFILAPNGRYCTDVDECQTPGICMNGHCINNEGSFRCDCPPGLAVGVDGRVCVDTHMRSTCYGEIKKGVCVRPFPGAVTKSECCCANPDYGFGEPCQPCPAKNSAEFHGLCSSGIGITVDGRDINECALDPDICANGICENLRGSYRCNCNSGYEPDASGRNCIDIDECLVNRLLCDNGLCRNTPGSYSCTCPPGYVFRTETETCEDVNECESNPCVNGACRNNLGSFHCECSPGSKLSSTGLICIDSLKGTCWLNIQDNRCEVNINGATLKSECCATLGAAWGSPCERCELDAACPRGFARIKGVTCEDVNECEVFPGVCPNGRCVNSKGSFHCECPEGLTLDGTGRVCLDIRMEHCFLKWDEDECIHPVPGKFRMDACCCAVGAAWGTECEECPKPGTKEYETLCPRGPGFANRGDILTGRPFYKDINECKAFPGMCTYGKCRNTIGSFKCRCNNGFALDMEERNCTDIDECRISPDLCGSGICVNTPGSFECECFEGYESGFMMMKNCMDIDECERNPLLCRGGTCVNTEGSFQCDCPLGHELSPSREDCVDINECSLSDNLCRNGKCVNMIGTYQCSCNPGYQATPDRQGCTDIDECMIMNGGCDTQCTNSEGSYECSCSEGYALMPDGRSCADIDECENNPDICDGGQCTNIPGEYRCLCYDGFMASMDMKTCIDVNECDLNPNICMFGECENTKGSFICHCQLGYSVKKGTTGCTDVDECEIGAHNCDMHASCLNVPGSFKCSCREGWVGNGIKCIDLDECANGTHQCSINAQCVNTPGSYRCACSEGFTGDGFTCSDVDECAENTNLCENGQCLNVPGAYRCECEMGFTPASDSRSCQDIDECSFQNICVFGTCNNLPGMFHCICDDGYELDRTGGNCTDIDECADPINCVNGLCVNTPGRYECNCPPDFQLNPTGVGCVDNRVGNCYLKFGPRGDGSLSCNTEVGVGVSRSSCCCSLGKAWGNPCETCPPVNSTEYYTLCPGGEGFRPNPITIILEDIDECQELPGLCQGGNCINTFGSFQCECPQGYYLSEETRICEDIDECFAHPGVCGPGTCYNTLGNYTCICPPEYMQVNGGHNCMDMRKSFCYRSYNGTTCENELPFNVTKRMCCCTYNVGKAWNKPCEPCPTPGTADFKTICGNIPGFTFDIHTGKAVDIDECKEIPGICANGVCINQIGSFRCECPTGFSYNDLLLVCEDIDECSNGDNLCQRNADCINSPGSYRCECAAGFKLSPNGACVDRNECLEIPNVCSHGLCVDLQGSYQCICNNGFKASQDQTMCMDVDECERHPCGNGTCKNTVGSYNCLCYPGFELTHNNDCLDIDECSSFFGQVCRNGRCFNEIGSFKCLCNEGYELTPDGKNCIDTNECVALPGSCSPGTCQNLEGSFRCICPPGYEVRSENCIDINECDEDPNICLFGSCTNTPGGFQCICPPGFVLSDNGRRCFDTRQSFCFTNFENGKCSVPKAFNTTKAKCCCSKMPGEGWGDPCELCPKDDEVAFQDLCPYGHGTVPSLHDTREDVNECLESPGICSNGQCINTDGSFRCECPMGYNLDYTGVRCVDTDECSIGNPCGNGTCTNVIGSFECTCNEGFEPGPMMNCEDINECAQNPLLCAFRCMNTFGSYECTCPVGYALREDQKMCKDLDECAEGLHDCESRGMMCKNLIGTFMCICPPGMARRPDGEGCVDENECRTKPGICENGRCVNIIGSYRCECNEGFQSSSSGTECLDNRQGLCFAEVLQTMCQMASSSRNLVTKSECCCDGGRGWGHQCELCPLPGTAQYKKICPHGPGYATDGRDIDECKVMPSLCTNGQCVNTMGSFRCFCKVGYTTDISGTACVDLDECSQSPKPCNFICKNTKGSYQCSCPRGYVLQEDGKTCKDLDECQTKQHNCQFLCVNTLGGFTCKCPPGFTQHHTACIDNNECGSQPSLCGAKGICQNTPGSFSCECQRGFSLDASGLNCEDVDECDGNHRCQHGCQNILGGYRCGCPQGYVQHYQWNQCVDENECSNPGACGSASCYNTLGSYKCACPSGFSFDQFSSACHDVNECSSSKNPCSYGCSNTEGGYLCGCPPGYFRVGQGHCVSGMGFNKGQYLSVDAEAEDDENALSPEACYECKINGYTKKDGRRKRSAQEPEPASAEEQISLESVAMDSPVNMKFNLSGLGSKEHILELVPAIEPLNNHIRYVISQGNEDGVFRIHQRNGLSYLHTAKKKLAPGTYTLEITSIPLYGKKELRKLEEHNEDDYLLGVLGEALRMRLQIQLY.

The N-terminal stretch at 1–28 (MGRRRRLCLQPYFVWLGCVALWAQGTDG) is a signal peptide. The disordered stretch occupies residues 26 to 58 (TDGQPQPPPPKTLRPQPPPQQVRPAVAGSEGGF). The propeptide occupies 29–77 (QPQPPPPKTLRPQPPPQQVRPAVAGSEGGFMGPEYRDEGAVAASRVRRR). Positions 30-46 (PQPPPPKTLRPQPPPQQ) are enriched in pro residues. 3 consecutive EGF-like domains span residues 111 to 142 (IVPI…PTCG), 145 to 176 (SIQQ…TYCG), and 176 to 208 (GQPV…PQCE). Intrachain disulfides connect cysteine 115–cysteine 124, cysteine 119–cysteine 130, cysteine 132–cysteine 141, cysteine 149–cysteine 159, cysteine 153–cysteine 164, cysteine 166–cysteine 175, cysteine 180–cysteine 190, cysteine 184–cysteine 196, and cysteine 198–cysteine 207. Positions 149 to 359 (CSVRCMNGGT…VTSTDGSRCI (211 aa)) are interaction with MFAP4. The TB 1 domain maps to 214–266 (GPCFTQVNNQMCQGQLTGIVCTKTLCCATIGRAWGHPCEMCPAQPQPCRRGFI). The EGF-like 4; calcium-binding domain occupies 276–317 (DVDECQAIPGLCQGGNCINTVGSFECRCPAGHKQSETTQKCE). Cystine bridges form between cysteine 280–cysteine 292, cysteine 287–cysteine 301, cysteine 303–cysteine 316, cysteine 322–cysteine 334, cysteine 329–cysteine 343, and cysteine 345–cysteine 358. An O-linked (Glc) serine glycan is attached at serine 298. Residues 318 to 359 (DIDECSVIPGVCETGDCSNTVGSYFCLCPRGFVTSTDGSRCI) enclose the EGF-like 5; calcium-binding domain. Serine 340 carries an O-linked (Glc) serine glycan. The 54-residue stretch at 364–417 (GTCFSGLVNGRCAQELPGRMAKAQCCCEPGRCWSIGTIPEACPVRGSEEYRRLC) folds into the TB 2 domain. Asparagine 485 is a glycosylation site (N-linked (GlcNAc...) asparagine). The region spanning 487 to 527 (TIDICKHHANLCLNGRCIPTVSSYRCECNMGYKQDANGDCI) is the EGF-like 6 domain. Intrachain disulfides connect cysteine 491-cysteine 503, cysteine 498-cysteine 512, cysteine 514-cysteine 526, cysteine 532-cysteine 542, cysteine 537-cysteine 551, cysteine 553-cysteine 566, cysteine 572-cysteine 584, cysteine 579-cysteine 593, cysteine 595-cysteine 608, cysteine 614-cysteine 625, cysteine 620-cysteine 634, cysteine 636-cysteine 649, cysteine 655-cysteine 666, cysteine 661-cysteine 675, and cysteine 677-cysteine 690. Serine 509 is a glycosylation site (O-linked (Glc) serine). The EGF-like 7; calcium-binding domain maps to 528–567 (DVDECTSNPCSNGDCVNTPGSYYCKCHAGFQRTPTKQACI). O-linked (Glc) serine glycosylation is present at serine 548. One can recognise an EGF-like 8; calcium-binding domain in the interval 568 to 609 (DIDECIQNGVLCKNGRCVNTDGSFQCICNAGFELTTDGKNCV). Serine 590 carries O-linked (Glc) serine glycosylation. Positions 610-650 (DHDECTTTNMCLNGMCINEDGSFKCVCKPGFILAPNGRYCT) constitute an EGF-like 9; calcium-binding domain. The O-linked (Glc) serine glycan is linked to serine 631. One can recognise an EGF-like 10; calcium-binding domain in the interval 651–691 (DVDECQTPGICMNGHCINNEGSFRCDCPPGLAVGVDGRVCV). Serine 672 is a glycosylation site (O-linked (Glc) serine). One can recognise a TB 3 domain in the interval 697 to 749 (STCYGEIKKGVCVRPFPGAVTKSECCCANPDYGFGEPCQPCPAKNSAEFHGLC). Residues 761–802 (DINECALDPDICANGICENLRGSYRCNCNSGYEPDASGRNCI) enclose the EGF-like 11; calcium-binding domain. 9 disulfide bridges follow: cysteine 765–cysteine 777, cysteine 772–cysteine 786, cysteine 788–cysteine 801, cysteine 807–cysteine 819, cysteine 814–cysteine 828, cysteine 830–cysteine 843, cysteine 849–cysteine 859, cysteine 854–cysteine 868, and cysteine 870–cysteine 883. Residues 803 to 844 (DIDECLVNRLLCDNGLCRNTPGSYSCTCPPGYVFRTETETCE) form the EGF-like 12; calcium-binding domain. The O-linked (Glc) serine glycan is linked to serine 825. Residues 845 to 883 (DVNECESNPCVNGACRNNLGSFHCECSPGSKLSSTGLIC) form the EGF-like 13; calcium-binding domain. An O-linked (Glc) serine glycan is attached at serine 865. Residues 889–940 (GTCWLNIQDNRCEVNINGATLKSECCATLGAAWGSPCERCELDAACPRGFAR) enclose the TB 4 domain. Residues 948-989 (DVNECEVFPGVCPNGRCVNSKGSFHCECPEGLTLDGTGRVCL) enclose the EGF-like 14; calcium-binding domain. 3 disulfides stabilise this stretch: cysteine 952-cysteine 964, cysteine 959-cysteine 973, and cysteine 975-cysteine 988. The O-linked (Glc) serine glycan is linked to serine 970. In terms of domain architecture, TB 5 spans 994–1045 (EHCFLKWDEDECIHPVPGKFRMDACCCAVGAAWGTECEECPKPGTKEYETLC). In terms of domain architecture, EGF-like 15; calcium-binding spans 1066–1107 (DINECKAFPGMCTYGKCRNTIGSFKCRCNNGFALDMEERNCT). Cystine bridges form between cysteine 1070-cysteine 1082, cysteine 1077-cysteine 1091, cysteine 1093-cysteine 1106, cysteine 1112-cysteine 1124, cysteine 1119-cysteine 1133, cysteine 1135-cysteine 1149, cysteine 1155-cysteine 1167, cysteine 1162-cysteine 1176, cysteine 1178-cysteine 1191, cysteine 1197-cysteine 1209, cysteine 1204-cysteine 1218, cysteine 1220-cysteine 1233, cysteine 1239-cysteine 1250, cysteine 1246-cysteine 1259, cysteine 1261-cysteine 1274, cysteine 1280-cysteine 1292, cysteine 1287-cysteine 1301, cysteine 1303-cysteine 1316, cysteine 1322-cysteine 1334, cysteine 1329-cysteine 1343, cysteine 1345-cysteine 1358, cysteine 1364-cysteine 1377, cysteine 1371-cysteine 1386, cysteine 1388-cysteine 1399, cysteine 1405-cysteine 1418, cysteine 1412-cysteine 1427, cysteine 1429-cysteine 1440, cysteine 1446-cysteine 1458, cysteine 1453-cysteine 1467, cysteine 1469-cysteine 1482, cysteine 1488-cysteine 1499, cysteine 1494-cysteine 1508, cysteine 1510-cysteine 1523, cysteine 1529-cysteine 1540, cysteine 1535-cysteine 1549, and cysteine 1551-cysteine 1564. O-linked (Glc) serine glycosylation occurs at serine 1088. N-linked (GlcNAc...) asparagine glycosylation is present at asparagine 1105. The EGF-like 16; calcium-binding domain occupies 1108–1150 (DIDECRISPDLCGSGICVNTPGSFECECFEGYESGFMMMKNCM). The 42-residue stretch at 1151–1192 (DIDECERNPLLCRGGTCVNTEGSFQCDCPLGHELSPSREDCV) folds into the EGF-like 17; calcium-binding domain. Serine 1173 carries O-linked (Glc) serine glycosylation. Residues 1193-1234 (DINECSLSDNLCRNGKCVNMIGTYQCSCNPGYQATPDRQGCT) form the EGF-like 18; calcium-binding domain. Residue threonine 1215 is glycosylated (O-linked (Glc) threonine). One can recognise an EGF-like 19; calcium-binding domain in the interval 1235 to 1275 (DIDECMIMNGGCDTQCTNSEGSYECSCSEGYALMPDGRSCA). O-linked (Glc) serine glycosylation is present at serine 1256. Residues 1276–1317 (DIDECENNPDICDGGQCTNIPGEYRCLCYDGFMASMDMKTCI) form the EGF-like 20; calcium-binding domain. Positions 1318–1359 (DVNECDLNPNICMFGECENTKGSFICHCQLGYSVKKGTTGCT) constitute an EGF-like 21; calcium-binding domain. A glycan (O-linked (Glc) serine) is linked at serine 1340. Residues 1360-1400 (DVDECEIGAHNCDMHASCLNVPGSFKCSCREGWVGNGIKCI) form the EGF-like 22; calcium-binding domain. Serine 1383 is a glycosylation site (O-linked (Glc) serine). Residues 1401–1441 (DLDECANGTHQCSINAQCVNTPGSYRCACSEGFTGDGFTCS) form the EGF-like 23; calcium-binding domain. Asparagine 1407 carries an N-linked (GlcNAc...) asparagine glycan. One can recognise an EGF-like 24; calcium-binding domain in the interval 1442 to 1483 (DVDECAENTNLCENGQCLNVPGAYRCECEMGFTPASDSRSCQ). Residues 1484-1524 (DIDECSFQNICVFGTCNNLPGMFHCICDDGYELDRTGGNCT) form the EGF-like 25; calcium-binding domain. A glycan (N-linked (GlcNAc...) asparagine) is linked at asparagine 1522. One can recognise an EGF-like 26; calcium-binding domain in the interval 1525–1565 (DIDECADPINCVNGLCVNTPGRYECNCPPDFQLNPTGVGCV). Positions 1570 to 1626 (GNCYLKFGPRGDGSLSCNTEVGVGVSRSSCCCSLGKAWGNPCETCPPVNSTEYYTLC) constitute a TB 6 domain. Residue asparagine 1618 is glycosylated (N-linked (GlcNAc...) asparagine). Positions 1643 to 1684 (DIDECQELPGLCQGGNCINTFGSFQCECPQGYYLSEETRICE) constitute an EGF-like 27; calcium-binding domain. 6 cysteine pairs are disulfide-bonded: cysteine 1647–cysteine 1659, cysteine 1654–cysteine 1668, cysteine 1670–cysteine 1683, cysteine 1689–cysteine 1701, cysteine 1696–cysteine 1710, and cysteine 1712–cysteine 1725. Serine 1665 is a glycosylation site (O-linked (Glc) serine). Residues 1685 to 1726 (DIDECFAHPGVCGPGTCYNTLGNYTCICPPEYMQVNGGHNCM) form the EGF-like 28; calcium-binding domain. A glycan (N-linked (GlcNAc...) asparagine) is linked at asparagine 1707. The interval 1728–2164 (MRKSFCYRSY…VPSLHDTRED (437 aa)) is interaction with MFAP4. A TB 7 domain is found at 1731–1784 (SFCYRSYNGTTCENELPFNVTKRMCCCTYNVGKAWNKPCEPCPTPGTADFKTIC). N-linked (GlcNAc...) asparagine glycosylation is found at asparagine 1738 and asparagine 1749. Residues 1801–1842 (DIDECKEIPGICANGVCINQIGSFRCECPTGFSYNDLLLVCE) enclose the EGF-like 29; calcium-binding domain. Cystine bridges form between cysteine 1805–cysteine 1817, cysteine 1812–cysteine 1826, cysteine 1828–cysteine 1841, cysteine 1847–cysteine 1860, cysteine 1854–cysteine 1869, cysteine 1871–cysteine 1883, cysteine 1889–cysteine 1901, cysteine 1896–cysteine 1910, cysteine 1912–cysteine 1925, cysteine 1931–cysteine 1941, cysteine 1936–cysteine 1950, cysteine 1952–cysteine 1964, cysteine 1970–cysteine 1983, cysteine 1978–cysteine 1992, cysteine 1994–cysteine 2007, cysteine 2013–cysteine 2025, cysteine 2020–cysteine 2034, cysteine 2036–cysteine 2047, cysteine 2053–cysteine 2065, cysteine 2060–cysteine 2074, and cysteine 2076–cysteine 2089. Residues 1843–1884 (DIDECSNGDNLCQRNADCINSPGSYRCECAAGFKLSPNGACV) enclose the EGF-like 30; calcium-binding domain. Residue serine 1866 is glycosylated (O-linked (Glc) serine). The EGF-like 31; calcium-binding domain occupies 1885 to 1926 (DRNECLEIPNVCSHGLCVDLQGSYQCICNNGFKASQDQTMCM). The region spanning 1927–1965 (DVDECERHPCGNGTCKNTVGSYNCLCYPGFELTHNNDCL) is the EGF-like 32; calcium-binding domain. N-linked (GlcNAc...) asparagine glycosylation occurs at asparagine 1938. O-linked (Glc) serine glycosylation occurs at serine 1947. An EGF-like 33; calcium-binding domain is found at 1966–2008 (DIDECSSFFGQVCRNGRCFNEIGSFKCLCNEGYELTPDGKNCI). O-linked (Glc) serine glycosylation is present at serine 1989. One can recognise an EGF-like 34; calcium-binding domain in the interval 2009–2048 (DTNECVALPGSCSPGTCQNLEGSFRCICPPGYEVRSENCI). The EGF-like 35; calcium-binding domain maps to 2049 to 2090 (DINECDEDPNICLFGSCTNTPGGFQCICPPGFVLSDNGRRCF). Positions 2095-2148 (SFCFTNFENGKCSVPKAFNTTKAKCCCSKMPGEGWGDPCELCPKDDEVAFQDLC) constitute a TB 8 domain. Asparagine 2113 carries N-linked (GlcNAc...) asparagine glycosylation. An EGF-like 36; calcium-binding domain is found at 2164-2205 (DVNECLESPGICSNGQCINTDGSFRCECPMGYNLDYTGVRCV). 15 disulfide bridges follow: cysteine 2168/cysteine 2180, cysteine 2175/cysteine 2189, cysteine 2191/cysteine 2204, cysteine 2210/cysteine 2221, cysteine 2216/cysteine 2230, cysteine 2232/cysteine 2244, cysteine 2250/cysteine 2261, cysteine 2257/cysteine 2270, cysteine 2272/cysteine 2285, cysteine 2291/cysteine 2305, cysteine 2298/cysteine 2314, cysteine 2316/cysteine 2329, cysteine 2335/cysteine 2347, cysteine 2342/cysteine 2356, and cysteine 2358/cysteine 2371. O-linked (Glc) serine glycosylation occurs at serine 2186. In terms of domain architecture, EGF-like 37; calcium-binding spans 2206–2245 (DTDECSIGNPCGNGTCTNVIGSFECTCNEGFEPGPMMNCE). Asparagine 2218 carries an N-linked (GlcNAc...) asparagine glycan. Residues 2246–2286 (DINECAQNPLLCAFRCMNTFGSYECTCPVGYALREDQKMCK) enclose the EGF-like 38; calcium-binding domain. O-linked (Glc) serine glycosylation is present at serine 2267. An EGF-like 39; calcium-binding domain is found at 2287-2330 (DLDECAEGLHDCESRGMMCKNLIGTFMCICPPGMARRPDGEGCV). The EGF-like 40; calcium-binding domain occupies 2331 to 2372 (DENECRTKPGICENGRCVNIIGSYRCECNEGFQSSSSGTECL). Serine 2353 carries an O-linked (Glc) serine glycan. One can recognise a TB 9 domain in the interval 2377-2430 (GLCFAEVLQTMCQMASSSRNLVTKSECCCDGGRGWGHQCELCPLPGTAQYKKIC). Residues 2442–2483 (DIDECKVMPSLCTNGQCVNTMGSFRCFCKVGYTTDISGTACV) form the EGF-like 41; calcium-binding domain. 21 disulfide bridges follow: cysteine 2446/cysteine 2458, cysteine 2453/cysteine 2467, cysteine 2469/cysteine 2482, cysteine 2488/cysteine 2499, cysteine 2495/cysteine 2508, cysteine 2510/cysteine 2523, cysteine 2529/cysteine 2540, cysteine 2536/cysteine 2549, cysteine 2551/cysteine 2562, cysteine 2568/cysteine 2581, cysteine 2575/cysteine 2590, cysteine 2592/cysteine 2605, cysteine 2611/cysteine 2621, cysteine 2617/cysteine 2630, cysteine 2632/cysteine 2645, cysteine 2651/cysteine 2662, cysteine 2657/cysteine 2671, cysteine 2673/cysteine 2686, cysteine 2692/cysteine 2703, cysteine 2699/cysteine 2712, and cysteine 2714/cysteine 2726. O-linked (Glc) serine glycosylation occurs at serine 2464. Positions 2484-2524 (DLDECSQSPKPCNFICKNTKGSYQCSCPRGYVLQEDGKTCK) constitute an EGF-like 42; calcium-binding domain. The O-linked (Glc) serine glycan is linked to serine 2505. Residues 2525 to 2563 (DLDECQTKQHNCQFLCVNTLGGFTCKCPPGFTQHHTACI) enclose the EGF-like 43; calcium-binding domain. Residues 2564 to 2606 (DNNECGSQPSLCGAKGICQNTPGSFSCECQRGFSLDASGLNCE) enclose the EGF-like 44; calcium-binding domain. Serine 2587 carries O-linked (Glc) serine glycosylation. The EGF-like 45; calcium-binding domain maps to 2607–2646 (DVDECDGNHRCQHGCQNILGGYRCGCPQGYVQHYQWNQCV). The region spanning 2647–2687 (DENECSNPGACGSASCYNTLGSYKCACPSGFSFDQFSSACH) is the EGF-like 46; calcium-binding domain. An O-linked (Glc) serine glycan is attached at serine 2668. In terms of domain architecture, EGF-like 47; calcium-binding spans 2688–2727 (DVNECSSSKNPCSYGCSNTEGGYLCGCPPGYFRVGQGHCV). A glycan (N-linked (GlcNAc...) asparagine) is linked at asparagine 2803.

It belongs to the fibrillin family. In terms of assembly, interacts with BMP2, BMP4, BMP7, BMP10 and GDF5. Interacts with MFAP2 and MFAP5. Interacts with ADAMTSL5. Interacts with MFAP4. Post-translationally, N-glycosylated. In terms of processing, O-glycosylated on serine residues by POGLUT2 and POGLUT3. In terms of tissue distribution, widely expressed.

Its subcellular location is the secreted. The protein localises to the extracellular space. The protein resides in the extracellular matrix. Functionally, fibrillins are structural components of 10-12 nm extracellular calcium-binding microfibrils, which occur either in association with elastin or in elastin-free bundles. Fibrillin-2-containing microfibrils regulate the early process of elastic fiber assembly. Regulates osteoblast maturation by controlling TGF-beta bioavailability and calibrating TGF-beta and BMP levels, respectively. Its function is as follows. Hormone secreted by trophoblasts that promotes trophoblast invasiveness. Has glucogenic activity: is able to increase plasma glucose levels. This is Fibrillin-2 from Mus musculus (Mouse).